Reading from the N-terminus, the 407-residue chain is GTPase Obg (407 aa).

Positions 1 to 159 constitute an Obg domain; it reads MKFVDEVSIR…RDLKMEMKVL (159 aa). Residues 127–150 form a disordered region; that stretch reads NTRFKSSTNRAPRQTTPGKPGDQR. A compositionally biased stretch (polar residues) spans 129–143; it reads RFKSSTNRAPRQTTP. The OBG-type G domain maps to 160 to 333; it reads ADVGLLGLPN…LSHDLMRYLE (174 aa). GTP contacts are provided by residues 166–173, 191–195, 213–216, 283–286, and 314–316; these read GLPNAGKS, FTTLV, DIPG, NKAD, and SAI. Positions 173 and 193 each coordinate Mg(2+). The segment at 378-407 is disordered; the sequence is VKSVHDIGDDDDWDDFEDDEDGPEIIYVRD. Positions 385–400 are enriched in acidic residues; it reads GDDDDWDDFEDDEDGP.

It belongs to the TRAFAC class OBG-HflX-like GTPase superfamily. OBG GTPase family. In terms of assembly, monomer. Mg(2+) is required as a cofactor.

The protein resides in the cytoplasm. Functionally, an essential GTPase which binds GTP, GDP and possibly (p)ppGpp with moderate affinity, with high nucleotide exchange rates and a fairly low GTP hydrolysis rate. Plays a role in control of the cell cycle, stress response, ribosome biogenesis and in those bacteria that undergo differentiation, in morphogenesis control. The polypeptide is GTPase Obg (Pseudomonas entomophila (strain L48)).